Reading from the N-terminus, the 419-residue chain is Gamma-glutamyl phosphate reductase (419 aa).

Belongs to the gamma-glutamyl phosphate reductase family.

It localises to the cytoplasm. It catalyses the reaction L-glutamate 5-semialdehyde + phosphate + NADP(+) = L-glutamyl 5-phosphate + NADPH + H(+). It participates in amino-acid biosynthesis; L-proline biosynthesis; L-glutamate 5-semialdehyde from L-glutamate: step 2/2. Catalyzes the NADPH-dependent reduction of L-glutamate 5-phosphate into L-glutamate 5-semialdehyde and phosphate. The product spontaneously undergoes cyclization to form 1-pyrroline-5-carboxylate. The sequence is that of Gamma-glutamyl phosphate reductase from Nitratidesulfovibrio vulgaris (strain DP4) (Desulfovibrio vulgaris).